The sequence spans 433 residues: D-amino acid dehydrogenase (433 aa).

3-17 (VLVLGSGVIGTTSAY) lines the FAD pocket.

It belongs to the DadA oxidoreductase family. It depends on FAD as a cofactor.

It carries out the reaction a D-alpha-amino acid + A + H2O = a 2-oxocarboxylate + AH2 + NH4(+). The protein operates within amino-acid degradation; D-alanine degradation; NH(3) and pyruvate from D-alanine: step 1/1. Functionally, oxidative deamination of D-amino acids. The protein is D-amino acid dehydrogenase of Pseudomonas syringae pv. syringae (strain B728a).